A 375-amino-acid chain; its full sequence is Glycogen synthase kinase-3 homolog YGK3 (375 aa).

The Protein kinase domain occupies 41–329 (VREGKRIGHG…ARQLMAHEFF (289 aa)). ATP-binding positions include 47–55 (IGHGSFGTV) and lysine 74. Residue aspartate 173 is the Proton acceptor of the active site. Phosphoserine is present on serine 211.

It belongs to the protein kinase superfamily. Ser/Thr protein kinase family.

It catalyses the reaction L-seryl-[protein] + ATP = O-phospho-L-seryl-[protein] + ADP + H(+). It carries out the reaction L-threonyl-[protein] + ATP = O-phospho-L-threonyl-[protein] + ADP + H(+). Functionally, required for heat stress-instigated phosphorylation of BCY1 which is involved in cell wall integrity signaling. Regulates activity of MSN2, a transcription factor that binds to the stress-response element (STRE). Probably promotes formation of a complex between MSN2 and DNA. Regulates the stability of ROG1. This chain is Glycogen synthase kinase-3 homolog YGK3 (YGK3), found in Saccharomyces cerevisiae (strain ATCC 204508 / S288c) (Baker's yeast).